The sequence spans 430 residues: Gamma-glutamyl phosphate reductase (430 aa).

The protein belongs to the gamma-glutamyl phosphate reductase family.

Its subcellular location is the cytoplasm. It catalyses the reaction L-glutamate 5-semialdehyde + phosphate + NADP(+) = L-glutamyl 5-phosphate + NADPH + H(+). Its pathway is amino-acid biosynthesis; L-proline biosynthesis; L-glutamate 5-semialdehyde from L-glutamate: step 2/2. Catalyzes the NADPH-dependent reduction of L-glutamate 5-phosphate into L-glutamate 5-semialdehyde and phosphate. The product spontaneously undergoes cyclization to form 1-pyrroline-5-carboxylate. This Rhodopseudomonas palustris (strain BisA53) protein is Gamma-glutamyl phosphate reductase.